We begin with the raw amino-acid sequence, 142 residues long: FAD synthase (142 aa).

Residues 9–10 (VF), 14–17 (HLGH), aspartate 93, and tyrosine 120 contribute to the ATP site.

This sequence belongs to the archaeal FAD synthase family. As to quaternary structure, homodimer. It depends on a divalent metal cation as a cofactor.

It carries out the reaction FMN + ATP + H(+) = FAD + diphosphate. It participates in cofactor biosynthesis; FAD biosynthesis; FAD from FMN: step 1/1. Functionally, catalyzes the transfer of the AMP portion of ATP to flavin mononucleotide (FMN) to produce flavin adenine dinucleotide (FAD) coenzyme. The protein is FAD synthase (ribL) of Thermoplasma volcanium (strain ATCC 51530 / DSM 4299 / JCM 9571 / NBRC 15438 / GSS1).